The primary structure comprises 1069 residues: DNA annealing helicase and endonuclease ZRANB3 (1069 aa).

One can recognise a Helicase ATP-binding domain in the interval 46–208 (VFALRRDGRC…FMQIEALFPQ (163 aa)). The interval 46–481 (VFALRRDGRC…GRKEKLQATE (436 aa)) is DNA annealing helicase activity. 59–66 (DEMGLGKT) contacts ATP. Positions 157-160 (DESH) match the DEAH box motif. Positions 325-485 (AVKDYIKMLL…KLQATEDDKE (161 aa)) constitute a Helicase C-terminal domain. The PIP-box motif lies at 518 to 525 (QHDIRSFF). The RanBP2-type zinc finger occupies 617–646 (PEKGWQCGFCTFLNNPGLPYCEMCENPRSR). Positions 648–720 (AGRNHLQDNN…PEIGQLNNSG (73 aa)) are disordered. 2 stretches are compositionally biased toward basic and acidic residues: residues 652–661 (HLQDNNKNDE) and 677–707 (ECER…EDRL). One can recognise an HNH domain in the interval 1001–1041 (PGEGHFWQVDHIRPVYEGGGQCSLDNLQTLCTVCHKERTAQ). An endonuclease activity region spans residues 1001 to 1069 (PGEGHFWQVD…SDITRFLVKK (69 aa)). The APIM motif motif lies at 1064–1068 (RFLVK).

This sequence belongs to the SNF2/RAD54 helicase family. Interacts (via PIP-box and RanBP2-type zinc finger) with PCNA (when PCNA is polyubiquitinated via 'Lys-63'-linked polyubiquitin).

The protein resides in the nucleus. Its subcellular location is the chromosome. Its function is as follows. DNA annealing helicase and endonuclease required to maintain genome stability at stalled or collapsed replication forks by facilitating fork restart and limiting inappropriate recombination that could occur during template switching events. Recruited to the sites of stalled DNA replication by polyubiquitinated PCNA and acts as a structure-specific endonuclease that cleaves the replication fork D-loop intermediate, generating an accessible 3'-OH group in the template of the leading strand, which is amenable to extension by DNA polymerase. In addition to endonuclease activity, also catalyzes the fork regression via annealing helicase activity in order to prevent disintegration of the replication fork and the formation of double-strand breaks. In Mus musculus (Mouse), this protein is DNA annealing helicase and endonuclease ZRANB3 (Zranb3).